The sequence spans 306 residues: D-alanine--D-alanine ligase B (306 aa).

Catalysis depends on residues E15 and S150. An ATP-grasp domain is found at 101–303 (KLLWQGAGLP…FSQLVVRILE (203 aa)). 134–189 (ISALGLPVIVKPSREGSSVGMSKVVAENALQDALRLAFQHDEEVLIEKWLSGPEFT) is a binding site for ATP. Positions 257, 270, and 272 each coordinate Mg(2+). S281 is a catalytic residue.

It belongs to the D-alanine--D-alanine ligase family. In terms of assembly, monomer. The cofactor is Mg(2+). Requires Mn(2+) as cofactor.

It is found in the cytoplasm. The enzyme catalyses 2 D-alanine + ATP = D-alanyl-D-alanine + ADP + phosphate + H(+). Its pathway is cell wall biogenesis; peptidoglycan biosynthesis. Its function is as follows. Cell wall formation. This Escherichia coli O157:H7 protein is D-alanine--D-alanine ligase B (ddlB).